The chain runs to 354 residues: Vanillate O-demethylase oxygenase subunit (354 aa).

The 101-residue stretch at 7–107 folds into the Rieske domain; it reads WYVACTPDEI…VEERYGFIWV (101 aa). Cys47, His49, Cys66, and His69 together coordinate [2Fe-2S] cluster.

The protein belongs to the bacterial ring-hydroxylating dioxygenase alpha subunit family. As to quaternary structure, this demethylase system consists of two proteins: an oxygenase and an oxygenase reductase. [2Fe-2S] cluster is required as a cofactor. Fe cation serves as cofactor.

It carries out the reaction vanillate + NADH + O2 + H(+) = 3,4-dihydroxybenzoate + formaldehyde + NAD(+) + H2O. Its pathway is xenobiotic degradation; vanillyl-alcohol degradation. This is Vanillate O-demethylase oxygenase subunit (vanA) from Pseudomonas sp. (strain HR199 / DSM 7063).